The sequence spans 208 residues: Peptide deformylase 3 (208 aa).

Fe cation is bound by residues C120 and H162. The active site involves E163. H166 is a Fe cation binding site.

It belongs to the polypeptide deformylase family. It depends on Fe(2+) as a cofactor.

The enzyme catalyses N-terminal N-formyl-L-methionyl-[peptide] + H2O = N-terminal L-methionyl-[peptide] + formate. Removes the formyl group from the N-terminal Met of newly synthesized proteins. Requires at least a dipeptide for an efficient rate of reaction. N-terminal L-methionine is a prerequisite for activity but the enzyme has broad specificity at other positions. The chain is Peptide deformylase 3 from Streptomyces coelicolor (strain ATCC BAA-471 / A3(2) / M145).